The following is a 196-amino-acid chain: Probable thymidylate kinase (196 aa).

7-14 (GIDGAGKT) is a binding site for ATP.

It belongs to the thymidylate kinase family.

The enzyme catalyses dTMP + ATP = dTDP + ADP. This chain is Probable thymidylate kinase (tmk), found in Archaeoglobus fulgidus (strain ATCC 49558 / DSM 4304 / JCM 9628 / NBRC 100126 / VC-16).